Here is a 199-residue protein sequence, read N- to C-terminus: LIM domain-containing protein E (199 aa).

The region spanning 5 to 65 (VKCGACAKTA…PVHTPKVSAT (61 aa)) is the LIM zinc-binding domain. The tract at residues 134–199 (YAVFGADGQP…EEEQQYEEEQ (66 aa)) is disordered. Low complexity-rich tracts occupy residues 146-155 (EQQEQQQYTE) and 163-174 (EEQQYQEEQQQY). The segment covering 175 to 199 (QEEEQQYQEEEQQYQEEEQQYEEEQ) has biased composition (acidic residues).

May interact with rac1A.

The protein localises to the cytoplasm. The protein resides in the cell cortex. It is found in the nucleus. Its subcellular location is the cell projection. It localises to the lamellipodium. The protein localises to the filopodium. The protein resides in the cytoskeleton. Functionally, associates with the actin cytoskeleton and may regulate actin polymerization in lamellipodia, through a rac1-dependent signaling pathway. May play a role in cell motility. Involved in cytokinesis by regulating the microtubule system and linking it to the cortical actin network. The polypeptide is LIM domain-containing protein E (limE) (Dictyostelium discoideum (Social amoeba)).